The following is a 345-amino-acid chain: MDVLSAVLLALLLIGANAFFVGAEFALISARRDRLEALAEQGKATAVTVIRAGEQLPAMLTGAQLGVTVSSILLGRVGEPAVVKLLQLSFGLSGVPPALLHTLSLAIVVALHVLLGEMVPKNIALAGPERTAMLLVPPYLVYVRLARPFIAVYNNCANAILRLVGVQPKDELDIAVSTAELSEMIAESLSEGLLDHEEHTRLTRALRIRTRLVADVAVPLVNIRAVQVSAVGSGPTIGGVEQALAQTGYSRFPVVDRGGRFIGYLHIKDVLTLGDNPQTVIDLAVVRPLPRVPQSLPLADALSRMRRINSHLALVTADNGSVVGMVALEDVVEDLVGTMRDGTHR.

Residues Met1–Glu198 enclose the CNNM transmembrane domain. 2 helical membrane passes run Val3–Ala23 and Val95–Leu115. 2 consecutive CBS domains span residues Ala217–Val280 and Val285–Gly342. A helical transmembrane segment spans residues Leu312–Val332.

The protein belongs to the TerC family.

It is found in the cell membrane. This is an uncharacterized protein from Mycobacterium tuberculosis (strain CDC 1551 / Oshkosh).